The following is a 168-amino-acid chain: MAEAFRGEYNQKVDAKARVSIPAPFRRVIEAGDPKYSGGRASFVLVYGGDRSYVECYTMTEMDRIEERIRALPMGTPRRRYLERNMITLALNMELDEDGRIVLPPKGREKLGITPDELKGGTEATFAGTLNKFQIWKADTYAAELAAEEEVILPPGADMLSLLEETGL.

SpoVT-AbrB domains lie at 8 to 51 (EYNQ…GGDR) and 90 to 140 (ALNM…KADT).

This sequence belongs to the MraZ family. As to quaternary structure, forms oligomers.

It localises to the cytoplasm. Its subcellular location is the nucleoid. The protein is Transcriptional regulator MraZ of Cereibacter sphaeroides (strain ATCC 17025 / ATH 2.4.3) (Rhodobacter sphaeroides).